The primary structure comprises 541 residues: Chaperonin GroEL 2 (541 aa).

Residues 29 to 32 (TLGP), 86 to 90 (DGTTT), glycine 413, 476 to 478 (NAA), and aspartate 492 contribute to the ATP site.

Belongs to the chaperonin (HSP60) family. In terms of assembly, forms a cylinder of 14 subunits composed of two heptameric rings stacked back-to-back. Interacts with the co-chaperonin GroES.

The protein resides in the secreted. It is found in the capsule. The protein localises to the cell surface. Its subcellular location is the cell wall. The catalysed reaction is ATP + H2O + a folded polypeptide = ADP + phosphate + an unfolded polypeptide.. Its function is as follows. Together with its co-chaperonin GroES, plays an essential role in assisting protein folding. The GroEL-GroES system forms a nano-cage that allows encapsulation of the non-native substrate proteins and provides a physical environment optimized to promote and accelerate protein folding. The polypeptide is Chaperonin GroEL 2 (Mycobacterium leprae (strain TN)).